A 107-amino-acid polypeptide reads, in one-letter code: Iron-binding protein IscA (107 aa).

Fe cation contacts are provided by Cys-35, Cys-99, and Cys-101.

It belongs to the HesB/IscA family. Homodimer; may form tetramers and higher multimers. It depends on Fe cation as a cofactor.

In terms of biological role, is able to transfer iron-sulfur clusters to apo-ferredoxin. Multiple cycles of [2Fe2S] cluster formation and transfer are observed, suggesting that IscA acts catalytically. Recruits intracellular free iron so as to provide iron for the assembly of transient iron-sulfur cluster in IscU in the presence of IscS, L-cysteine and the thioredoxin reductase system TrxA/TrxB. The protein is Iron-binding protein IscA of Klebsiella pneumoniae (strain 342).